The primary structure comprises 155 residues: Ribonuclease H (155 aa).

Residues Asp-5–Thr-146 form the RNase H type-1 domain. The Mg(2+) site is built by Asp-14, Glu-52, Asp-74, and Asp-138. The interval Glu-133–Lys-155 is disordered.

This sequence belongs to the RNase H family. As to quaternary structure, monomer. Mg(2+) is required as a cofactor.

It localises to the cytoplasm. The catalysed reaction is Endonucleolytic cleavage to 5'-phosphomonoester.. Its function is as follows. Endonuclease that specifically degrades the RNA of RNA-DNA hybrids. The polypeptide is Ribonuclease H (Rhodopseudomonas palustris (strain ATCC BAA-98 / CGA009)).